A 29-amino-acid chain; its full sequence is Trypsin inhibitor 2 (29 aa).

3 cysteine pairs are disulfide-bonded: cysteine 3–cysteine 20, cysteine 10–cysteine 22, and cysteine 16–cysteine 28.

Belongs to the protease inhibitor I7 (squash-type serine protease inhibitor) family.

It localises to the secreted. Its function is as follows. Inhibits trypsin. In Bryonia dioica (Red bryony), this protein is Trypsin inhibitor 2.